The chain runs to 293 residues: Transcription initiation factor IIB 2 (293 aa).

The TFIIB-type zinc-finger motif lies at 1-31 (MKCPYCKTDNAITYDVEKGMYVCTNCASVIE). Residues C3, C6, C23, and C26 each contribute to the Zn(2+) site. 2 consecutive repeat copies span residues 107 to 193 (SILN…ANSI) and 204 to 285 (EYIP…DIVD).

Belongs to the TFIIB family.

Functionally, stabilizes TBP binding to an archaeal box-A promoter. Also responsible for recruiting RNA polymerase II to the pre-initiation complex (DNA-TBP-TFIIB). This Saccharolobus solfataricus (strain ATCC 35092 / DSM 1617 / JCM 11322 / P2) (Sulfolobus solfataricus) protein is Transcription initiation factor IIB 2.